Reading from the N-terminus, the 680-residue chain is DNA ligase 1 (680 aa).

NAD(+) contacts are provided by residues 35-39, 84-85, and aspartate 115; these read DAEYD and SL. Lysine 117 serves as the catalytic N6-AMP-lysine intermediate. NAD(+) is bound by residues arginine 138, glutamate 175, lysine 295, and lysine 319. Zn(2+) is bound by residues cysteine 413, cysteine 416, cysteine 431, and cysteine 436. A BRCT domain is found at 599–680; sequence REGSQLQGLK…FANLLKGLDR (82 aa).

Belongs to the NAD-dependent DNA ligase family. LigA subfamily. The cofactor is Mg(2+). It depends on Mn(2+) as a cofactor.

It carries out the reaction NAD(+) + (deoxyribonucleotide)n-3'-hydroxyl + 5'-phospho-(deoxyribonucleotide)m = (deoxyribonucleotide)n+m + AMP + beta-nicotinamide D-nucleotide.. Its function is as follows. DNA ligase that catalyzes the formation of phosphodiester linkages between 5'-phosphoryl and 3'-hydroxyl groups in double-stranded DNA using NAD as a coenzyme and as the energy source for the reaction. It is essential for DNA replication and repair of damaged DNA. This is DNA ligase 1 from Nitratidesulfovibrio vulgaris (strain DP4) (Desulfovibrio vulgaris).